The primary structure comprises 1420 residues: tRNA (32-2'-O)-methyltransferase regulator TRM732 (1420 aa).

Positions 748-754 (RRSGGLP) are required for activity.

This sequence belongs to the THADA family. In terms of assembly, interacts with TRM7; for 2'-O-methylation of position 32 in substrate tRNAs.

It is found in the cytoplasm. Together with methyltransferase TRM7, methylates the 2'-O-ribose of nucleotides at position 32 of the anticodon loop of substrate tRNAs. The protein is tRNA (32-2'-O)-methyltransferase regulator TRM732 (TRM732) of Saccharomyces cerevisiae (strain ATCC 204508 / S288c) (Baker's yeast).